A 511-amino-acid chain; its full sequence is ATP synthase subunit alpha (511 aa).

An ATP-binding site is contributed by 170–177 (GDRQTGKT).

Belongs to the ATPase alpha/beta chains family. As to quaternary structure, F-type ATPases have 2 components, CF(1) - the catalytic core - and CF(0) - the membrane proton channel. CF(1) has five subunits: alpha(3), beta(3), gamma(1), delta(1), epsilon(1). CF(0) has three main subunits: a(1), b(2) and c(9-12). The alpha and beta chains form an alternating ring which encloses part of the gamma chain. CF(1) is attached to CF(0) by a central stalk formed by the gamma and epsilon chains, while a peripheral stalk is formed by the delta and b chains.

The protein localises to the cell inner membrane. It catalyses the reaction ATP + H2O + 4 H(+)(in) = ADP + phosphate + 5 H(+)(out). Functionally, produces ATP from ADP in the presence of a proton gradient across the membrane. The alpha chain is a regulatory subunit. This chain is ATP synthase subunit alpha, found in Pelagibacter ubique (strain HTCC1062).